A 99-amino-acid chain; its full sequence is Large ribosomal subunit protein uL23 (99 aa).

It belongs to the universal ribosomal protein uL23 family. Part of the 50S ribosomal subunit. Contacts protein L29, and trigger factor when it is bound to the ribosome.

Functionally, one of the early assembly proteins it binds 23S rRNA. One of the proteins that surrounds the polypeptide exit tunnel on the outside of the ribosome. Forms the main docking site for trigger factor binding to the ribosome. This Oenococcus oeni (strain ATCC BAA-331 / PSU-1) protein is Large ribosomal subunit protein uL23.